Reading from the N-terminus, the 156-residue chain is Transcriptional repressor NrdR (156 aa).

A zinc finger spans residues Cys3–Cys34. The 91-residue stretch at Leu49–Gln139 folds into the ATP-cone domain.

This sequence belongs to the NrdR family. The cofactor is Zn(2+).

Functionally, negatively regulates transcription of bacterial ribonucleotide reductase nrd genes and operons by binding to NrdR-boxes. The chain is Transcriptional repressor NrdR from Staphylococcus epidermidis (strain ATCC 35984 / DSM 28319 / BCRC 17069 / CCUG 31568 / BM 3577 / RP62A).